The primary structure comprises 77 residues: Small ribosomal subunit protein bS20 (77 aa).

This sequence belongs to the bacterial ribosomal protein bS20 family.

Functionally, binds directly to 16S ribosomal RNA. In Streptococcus uberis (strain ATCC BAA-854 / 0140J), this protein is Small ribosomal subunit protein bS20.